The chain runs to 86 residues: Kunitz-type conkunitzin-S1 (86 aa).

The first 26 residues, 1–26 (MEGRRFAAVLILTICMLAPGTGTLLP), serve as a signal peptide directing secretion. The BPTI/Kunitz inhibitor domain maps to 33-83 (CDLPADSGSGTKAEKRIYYNSARKQCLRFDYTGQGGNENNFRRTYDCQRTC). 2 disulfides stabilise this stretch: C33-C83 and C58-C79. Residue T86 is modified to Threonine amide.

This sequence belongs to the venom Kunitz-type family. In terms of processing, contains 2 disulfide bonds instead of 3, as for all Kunitz domain proteins. A double Cys-mutant carrying an additional Cys bridge does not show difference in activity with the natural peptide. However, there are some differences in the kinetics of binding of both peptides to the channel. As to expression, expressed by the venom duct.

The protein localises to the secreted. Its function is as follows. Blocks specifically voltage-activated potassium channels (Kv) of the Shaker family (IC(50)=1.33 nM). In Conus striatus (Striated cone), this protein is Kunitz-type conkunitzin-S1.